The primary structure comprises 537 residues: Carbamoyl phosphate synthase large chain, C-terminal section (537 aa).

Positions methionine 1–glycine 395 are carbamoyl phosphate synthetic domain. The ATP-grasp domain maps to arginine 122–isoleucine 313. Positions 158, 197, 199, 204, 229, 230, 231, 232, 272, and 284 each coordinate ATP. 3 residues coordinate Mg(2+): glutamine 272, glutamate 284, and asparagine 286. Mn(2+) contacts are provided by glutamine 272, glutamate 284, and asparagine 286. The MGS-like domain occupies tyrosine 396–isoleucine 537. An allosteric domain region spans residues tyrosine 396–isoleucine 537.

The protein belongs to the CarB family. In terms of assembly, composed of two chains; the small (or glutamine) chain promotes the hydrolysis of glutamine to ammonia, which is used by the large (or ammonia) chain to synthesize carbamoyl phosphate. Tetramer of heterodimers (alpha,beta)4. The cofactor is Mg(2+). Requires Mn(2+) as cofactor.

It catalyses the reaction hydrogencarbonate + L-glutamine + 2 ATP + H2O = carbamoyl phosphate + L-glutamate + 2 ADP + phosphate + 2 H(+). It carries out the reaction hydrogencarbonate + NH4(+) + 2 ATP = carbamoyl phosphate + 2 ADP + phosphate + 2 H(+). Its pathway is amino-acid biosynthesis; L-arginine biosynthesis; carbamoyl phosphate from bicarbonate: step 1/1. The protein operates within pyrimidine metabolism; UMP biosynthesis via de novo pathway; (S)-dihydroorotate from bicarbonate: step 1/3. Its function is as follows. Large subunit of the glutamine-dependent carbamoyl phosphate synthetase (CPSase). CPSase catalyzes the formation of carbamoyl phosphate from the ammonia moiety of glutamine, carbonate, and phosphate donated by ATP, constituting the first step of 2 biosynthetic pathways, one leading to arginine and/or urea and the other to pyrimidine nucleotides. The large subunit (synthetase) binds the substrates ammonia (free or transferred from glutamine from the small subunit), hydrogencarbonate and ATP and carries out an ATP-coupled ligase reaction, activating hydrogencarbonate by forming carboxy phosphate which reacts with ammonia to form carbamoyl phosphate. This chain is Carbamoyl phosphate synthase large chain, C-terminal section (carB2), found in Aquifex aeolicus (strain VF5).